Consider the following 64-residue polypeptide: Translational regulator CsrA (64 aa).

This sequence belongs to the CsrA/RsmA family. In terms of assembly, homodimer; the beta-strands of each monomer intercalate to form a hydrophobic core, while the alpha-helices form wings that extend away from the core.

The protein resides in the cytoplasm. Its function is as follows. A key translational regulator that binds mRNA to regulate translation initiation and/or mRNA stability. Mediates global changes in gene expression, shifting from rapid growth to stress survival by linking envelope stress, the stringent response and the catabolite repression systems. Usually binds in the 5'-UTR; binding at or near the Shine-Dalgarno sequence prevents ribosome-binding, repressing translation, binding elsewhere in the 5'-UTR can activate translation and/or stabilize the mRNA. Its function is antagonized by small RNA(s). In Dichelobacter nodosus (strain VCS1703A), this protein is Translational regulator CsrA.